The chain runs to 321 residues: MTAHPEFAVIGAGAWGTALASLYAAQGRRVALVARDSTKAAALATTRTTPRLPGLRLPDSLAVTARPPEAPVTLLAVPFQHLRETLGRLPQGNGTLVLCAKGVERESGALGPEIAAEMEPRRPCAVLTGPNFAHEIAIGLPAAAVLAMTDDGARRDLVQHLATPRLRVYGSADPIGAALGGAAKNVIAIAAGAVIGAGLGENARAALITRGLAEIARLTEALGGAAETISGLAGLGDLILTATGSASRNYRAGLAFGQGKRPDTEAGVIEGIATAPALLARARATGCEMPVTEAVTDLLAGRITLEASMNRLLRRALRDER.

NADPH-binding residues include tryptophan 15, arginine 35, and lysine 101. The sn-glycerol 3-phosphate site is built by lysine 101 and glycine 129. Alanine 133 lines the NADPH pocket. Residues lysine 184, aspartate 237, serine 247, arginine 248, and asparagine 249 each contribute to the sn-glycerol 3-phosphate site. The active-site Proton acceptor is the lysine 184. Position 248 (arginine 248) interacts with NADPH. The NADPH site is built by valine 268 and glutamate 270.

This sequence belongs to the NAD-dependent glycerol-3-phosphate dehydrogenase family.

Its subcellular location is the cytoplasm. It catalyses the reaction sn-glycerol 3-phosphate + NAD(+) = dihydroxyacetone phosphate + NADH + H(+). The enzyme catalyses sn-glycerol 3-phosphate + NADP(+) = dihydroxyacetone phosphate + NADPH + H(+). It participates in membrane lipid metabolism; glycerophospholipid metabolism. Catalyzes the reduction of the glycolytic intermediate dihydroxyacetone phosphate (DHAP) to sn-glycerol 3-phosphate (G3P), the key precursor for phospholipid synthesis. This chain is Glycerol-3-phosphate dehydrogenase [NAD(P)+], found in Acidiphilium cryptum (strain JF-5).